The following is a 122-amino-acid chain: Small ribosomal subunit protein uS13 (122 aa).

Positions 93 to 122 are disordered; it reads RRGLPVRGQRTKTNARTRKGPKKTVAGKKK.

Belongs to the universal ribosomal protein uS13 family. In terms of assembly, part of the 30S ribosomal subunit. Forms a loose heterodimer with protein S19. Forms two bridges to the 50S subunit in the 70S ribosome.

In terms of biological role, located at the top of the head of the 30S subunit, it contacts several helices of the 16S rRNA. In the 70S ribosome it contacts the 23S rRNA (bridge B1a) and protein L5 of the 50S subunit (bridge B1b), connecting the 2 subunits; these bridges are implicated in subunit movement. Contacts the tRNAs in the A and P-sites. This is Small ribosomal subunit protein uS13 from Micrococcus luteus (strain ATCC 4698 / DSM 20030 / JCM 1464 / CCM 169 / CCUG 5858 / IAM 1056 / NBRC 3333 / NCIMB 9278 / NCTC 2665 / VKM Ac-2230) (Micrococcus lysodeikticus).